A 77-amino-acid chain; its full sequence is Acyl carrier protein (77 aa).

Residues 1-76 (MSLEDDVKAI…DVIKYIQERQ (76 aa)) form the Carrier domain. S36 is modified (O-(pantetheine 4'-phosphoryl)serine).

This sequence belongs to the acyl carrier protein (ACP) family. Post-translationally, 4'-phosphopantetheine is transferred from CoA to a specific serine of apo-ACP by AcpS. This modification is essential for activity because fatty acids are bound in thioester linkage to the sulfhydryl of the prosthetic group.

It is found in the cytoplasm. It participates in lipid metabolism; fatty acid biosynthesis. Its function is as follows. Carrier of the growing fatty acid chain in fatty acid biosynthesis. The protein is Acyl carrier protein of Chlamydia muridarum (strain MoPn / Nigg).